A 192-amino-acid chain; its full sequence is Adenylate kinase (192 aa).

Gly10–Thr18 contributes to the ATP binding site.

Belongs to the archaeal adenylate kinase family. In terms of assembly, monomer.

The protein resides in the cytoplasm. The catalysed reaction is AMP + ATP = 2 ADP. This is Adenylate kinase from Methanococcus maripaludis (strain C7 / ATCC BAA-1331).